The chain runs to 281 residues: Cytochrome bc1 complex cytochrome c subunit (281 aa).

Residues 17-37 (AAGAMALAVGLTGAGILVNAV) form a helical membrane-spanning segment. 2 Cytochrome c domains span residues 52–132 (ALIQ…EANG) and 162–240 (ADVA…KSAK). Heme c contacts are provided by Cys-65, Cys-68, His-69, Cys-175, Cys-178, and His-179. A helical transmembrane segment spans residues 259–279 (GMMMWLVGIVVLVAAAMWIGS).

As to quaternary structure, the cytochrome bc1 complex is composed of a cytochrome b (QcrB), the Rieske iron-sulfur protein (QcrA) and a diheme cytochrome c (QcrC) subunit. The bc1 complex forms a supercomplex with cytochrome c oxidase (cytochrome aa3). Post-translationally, binds 2 heme c groups covalently per subunit.

Its subcellular location is the cell membrane. The enzyme catalyses a quinol + 2 Fe(III)-[cytochrome c](out) = a quinone + 2 Fe(II)-[cytochrome c](out) + 2 H(+)(out). Its function is as follows. Cytochrome c1 subunit of the cytochrome bc1 complex, an essential component of the respiratory electron transport chain required for ATP synthesis. The bc1 complex catalyzes the oxidation of menaquinol and the reduction of cytochrome c in the respiratory chain. The bc1 complex operates through a Q-cycle mechanism that couples electron transfer to generation of the proton gradient that drives ATP synthesis. The polypeptide is Cytochrome bc1 complex cytochrome c subunit (qcrC) (Corynebacterium diphtheriae (strain ATCC 700971 / NCTC 13129 / Biotype gravis)).